Consider the following 416-residue polypeptide: Serine hydroxymethyltransferase (416 aa).

(6S)-5,6,7,8-tetrahydrofolate contacts are provided by residues leucine 118 and 122–124 (GHL). An N6-(pyridoxal phosphate)lysine modification is found at lysine 226. (6S)-5,6,7,8-tetrahydrofolate-binding positions include glutamate 242 and 350–352 (SPF).

This sequence belongs to the SHMT family. As to quaternary structure, homodimer. Pyridoxal 5'-phosphate is required as a cofactor.

It is found in the cytoplasm. It carries out the reaction (6R)-5,10-methylene-5,6,7,8-tetrahydrofolate + glycine + H2O = (6S)-5,6,7,8-tetrahydrofolate + L-serine. The protein operates within one-carbon metabolism; tetrahydrofolate interconversion. It functions in the pathway amino-acid biosynthesis; glycine biosynthesis; glycine from L-serine: step 1/1. In terms of biological role, catalyzes the reversible interconversion of serine and glycine with tetrahydrofolate (THF) serving as the one-carbon carrier. This reaction serves as the major source of one-carbon groups required for the biosynthesis of purines, thymidylate, methionine, and other important biomolecules. Also exhibits THF-independent aldolase activity toward beta-hydroxyamino acids, producing glycine and aldehydes, via a retro-aldol mechanism. The protein is Serine hydroxymethyltransferase of Helicobacter pylori (strain Shi470).